A 130-amino-acid chain; its full sequence is Ribosome-binding factor A (130 aa).

Belongs to the RbfA family. In terms of assembly, monomer. Binds 30S ribosomal subunits, but not 50S ribosomal subunits or 70S ribosomes.

The protein resides in the cytoplasm. In terms of biological role, one of several proteins that assist in the late maturation steps of the functional core of the 30S ribosomal subunit. Associates with free 30S ribosomal subunits (but not with 30S subunits that are part of 70S ribosomes or polysomes). Required for efficient processing of 16S rRNA. May interact with the 5'-terminal helix region of 16S rRNA. The sequence is that of Ribosome-binding factor A from Methylibium petroleiphilum (strain ATCC BAA-1232 / LMG 22953 / PM1).